The primary structure comprises 217 residues: Large ribosomal subunit protein uL1 (217 aa).

This sequence belongs to the universal ribosomal protein uL1 family. In terms of assembly, part of the 50S ribosomal subunit.

Its function is as follows. Binds directly to 23S rRNA. Probably involved in E site tRNA release. Protein L1 is also a translational repressor protein, it controls the translation of its operon by binding to its mRNA. The sequence is that of Large ribosomal subunit protein uL1 from Thermoplasma volcanium (strain ATCC 51530 / DSM 4299 / JCM 9571 / NBRC 15438 / GSS1).